Here is a 415-residue protein sequence, read N- to C-terminus: Serine/threonine-protein kinase H1 homolog (415 aa).

The tract at residues 1–70 is disordered; it reads MGCMSSKLVP…SNRKVKKYRD (70 aa). The span at 41-50 shows a compositional bias: basic and acidic residues; that stretch reads GPRDPTKDPK. The Protein kinase domain occupies 80-334; it reads YDIKALIGRG…AADALKHQWL (255 aa). Residues 86–94 and Lys-109 each bind ATP; that span reads IGRGNFSKV. Asp-198 functions as the Proton acceptor in the catalytic mechanism. The segment covering 353-362 has biased composition (polar residues); sequence NLIHRQSTRA. The tract at residues 353–415 is disordered; it reads NLIHRQSTRA…DVQADLASLG (63 aa). A compositionally biased stretch (low complexity) spans 363–385; sequence NSTKSAKSTRSTKSNKSNRSGRS. Residues 386 to 406 are compositionally biased toward basic and acidic residues; that stretch reads LRSEHRRVMPDEIDELHRDPD.

Belongs to the protein kinase superfamily. CAMK Ser/Thr protein kinase family.

The enzyme catalyses L-seryl-[protein] + ATP = O-phospho-L-seryl-[protein] + ADP + H(+). It carries out the reaction L-threonyl-[protein] + ATP = O-phospho-L-threonyl-[protein] + ADP + H(+). The protein is Serine/threonine-protein kinase H1 homolog (PSKH1) of Pinctada fucata (Akoya pearl oyster).